The following is a 187-amino-acid chain: Putative protein 2 (187 aa).

Transmembrane regions (helical) follow at residues 10-27 (MLAA…NVGV) and 99-121 (VTII…LLLV).

Belongs to the TMEM9 family.

The protein localises to the membrane. This chain is Putative protein 2, found in Takifugu rubripes (Japanese pufferfish).